Reading from the N-terminus, the 706-residue chain is Complement C1r-B subcomponent (706 aa).

An N-terminal signal peptide occupies residues 1 to 16 (MWLFALLVTLFYGVEG). In terms of domain architecture, CUB 1 spans 17–140 (SIYLPQKLYG…KGFLAYYQAV (124 aa)). 3 residues coordinate Ca(2+): Glu-65, Asp-73, and Asp-118. A disulfide bridge connects residues Cys-70 and Cys-88. N-linked (GlcNAc...) asparagine glycosylation is present at Asn-124. The Ca(2+) site is built by Asp-141, Leu-142, and Glu-144. Residues 141–189 (DLDECASQPNSVEEGLQPRCQHLCHNYVGGYFCSCHPGYELQKDGQSCQ) enclose the EGF-like; calcium-binding domain. 4 disulfide bridges follow: Cys-145–Cys-164, Cys-160–Cys-173, Cys-175–Cys-188, and Cys-192–Cys-219. Residues Asn-166, Tyr-167, and Gly-170 each coordinate Ca(2+). (3R)-3-hydroxyasparagine is present on Asn-166. The region spanning 192-304 (CSSELYTEPS…RGWKLHYTTE (113 aa)) is the CUB 2 domain. Ser-205 is subject to Phosphoserine; by CK2. Asn-220 carries an N-linked (GlcNAc...) asparagine glycan. Asp-242, Asp-252, Asp-289, and Asp-293 together coordinate Ca(2+). A disulfide bridge connects residues Cys-249 and Cys-267. 2 Sushi domains span residues 306-372 (IKCP…RCKI) and 373-448 (KNCG…RCLP). 5 disulfide bridges follow: Cys-308–Cys-357, Cys-337–Cys-370, Cys-375–Cys-428, Cys-405–Cys-446, and Cys-450–Cys-578. The region spanning 463-703 (IIGGQPARPG…YVDWIKKEMG (241 aa)) is the Peptidase S1 domain. Residues His-501 and Asp-558 each act as charge relay system in the active site. An N-linked (GlcNAc...) asparagine glycan is attached at Asn-582. Cystine bridges form between Cys-621–Cys-640 and Cys-651–Cys-681. Ser-655 acts as the Charge relay system in catalysis.

This sequence belongs to the peptidase S1 family. As to quaternary structure, core component of the complement C1 complex, a calcium-dependent complex composed of 1 molecule of the C1Q subcomplex, 2 molecules of C1R and 2 molecules of C1S. The C1Q subcomplex is composed 18 subunits: 3 chains of C1QA, C1QB, and C1QC trimerize to form 6 collagen-like triple helices connected to six globular ligand-recognition modules. Within the C1 complex, C1R is a dimer of identical chains, each of which is activated by cleavage into two chains, heavy and light, connected by disulfide bonds. Post-translationally, cleaved and activated by autocatalytic processing to generate Complement C1r subcomponent heavy and light chains that are connected by disulfide bonds. In terms of processing, the iron and 2-oxoglutarate dependent 3-hydroxylation of aspartate and asparagine is (R) stereospecific within EGF domains.

The protein resides in the secreted. It localises to the cell surface. It carries out the reaction Selective cleavage of Lys(or Arg)-|-Ile bond in complement subcomponent C1s to form the active form of C1s (EC 3.4.21.42).. Its activity is regulated as follows. Activated by the C1Q subcomplex of the C1 complex following C1Q binding to immunoglobulins (IgG or IgM) complexed with antigens to form antigen-antibody complexes on the surface of pathogens. Immunoglobulin-binding promotes autoactivation of C1R, which results in the cleavage of the Arg-Ile bond in the catalytic domain. Functionally, serine protease component of the complement C1 complex, a multiprotein complex that initiates the classical pathway of the complement system, a cascade of proteins that leads to phagocytosis and breakdown of pathogens and signaling that strengthens the adaptive immune system. C1R catalyzes the first enzymatic step in the classical complement pathway: it is activated by the C1Q subcomplex of the C1 complex, which associates with IgG or IgM immunoglobulins complexed with antigens to form antigen-antibody complexes on the surface of pathogens. Immunoglobulin-binding promotes the autocatalytic cleavage and activation of C1R. Activated C1R then cleaves and activates C1S, the second protease of the classical complement pathway. It is unclear if C1R activates C1S within single, strained C1 complexes or between neighboring C1 complexes on surfaces. This is Complement C1r-B subcomponent (C1rb) from Mus musculus (Mouse).